The primary structure comprises 173 residues: Crossover junction endodeoxyribonuclease RuvC (173 aa).

Residues Asp-8, Glu-67, and Asp-139 contribute to the active site. Mg(2+) contacts are provided by Asp-8, Glu-67, and Asp-139.

Belongs to the RuvC family. As to quaternary structure, homodimer which binds Holliday junction (HJ) DNA. The HJ becomes 2-fold symmetrical on binding to RuvC with unstacked arms; it has a different conformation from HJ DNA in complex with RuvA. In the full resolvosome a probable DNA-RuvA(4)-RuvB(12)-RuvC(2) complex forms which resolves the HJ. Mg(2+) is required as a cofactor.

The protein localises to the cytoplasm. The enzyme catalyses Endonucleolytic cleavage at a junction such as a reciprocal single-stranded crossover between two homologous DNA duplexes (Holliday junction).. Functionally, the RuvA-RuvB-RuvC complex processes Holliday junction (HJ) DNA during genetic recombination and DNA repair. Endonuclease that resolves HJ intermediates. Cleaves cruciform DNA by making single-stranded nicks across the HJ at symmetrical positions within the homologous arms, yielding a 5'-phosphate and a 3'-hydroxyl group; requires a central core of homology in the junction. The consensus cleavage sequence is 5'-(A/T)TT(C/G)-3'. Cleavage occurs on the 3'-side of the TT dinucleotide at the point of strand exchange. HJ branch migration catalyzed by RuvA-RuvB allows RuvC to scan DNA until it finds its consensus sequence, where it cleaves and resolves the cruciform DNA. This chain is Crossover junction endodeoxyribonuclease RuvC, found in Edwardsiella ictaluri (strain 93-146).